A 91-amino-acid polypeptide reads, in one-letter code: Small ribosomal subunit protein bS16 (91 aa).

It belongs to the bacterial ribosomal protein bS16 family.

This chain is Small ribosomal subunit protein bS16, found in Exiguobacterium sp. (strain ATCC BAA-1283 / AT1b).